Consider the following 328-residue polypeptide: uncharacterized protein (328 aa).

This is an uncharacterized protein from Saccharomyces cerevisiae (strain ATCC 204508 / S288c) (Baker's yeast).